The sequence spans 229 residues: Ras-related protein RABA6b (229 aa).

Position 20–27 (20–27 (GDSAVGKS)) interacts with GTP. The short motif at 42–50 (SKPTIGVDF) is the Effector region element. GTP-binding positions include 68–72 (DTAGQ), 126–129 (NKSD), and 156–157 (SA). S-geranylgeranyl cysteine attachment occurs at residues Cys-226 and Cys-227.

Belongs to the small GTPase superfamily. Rab family.

It localises to the cell membrane. Intracellular vesicle trafficking and protein transport. In Arabidopsis thaliana (Mouse-ear cress), this protein is Ras-related protein RABA6b (RABA6B).